A 295-amino-acid chain; its full sequence is Protein U26 (295 aa).

Transmembrane regions (helical) follow at residues 4–24, 31–51, 66–86, 103–123, 183–203, 218–238, 243–263, and 274–294; these read LTDSFILGLAKGAVIPGLYTF, SPLGQIGVLITVAISFLLTFK, IVFLSLMAPKLPSLLSAVVMI, VMIMPSYSPAVFTGIMVSLFF, FTVEFLLLFTMLWIGKMFLSM, VFFKLNVFKAAACAVVAILSG, VCLYRIIFEAFVGLGFSSIML, and FYAGDLLNGFFCLVVCCMYFG.

The protein localises to the membrane. The chain is Protein U26 (U26) from Human herpesvirus 6A (strain Uganda-1102) (HHV-6 variant A).